Consider the following 131-residue polypeptide: Fumarate reductase subunit C (131 aa).

Helical transmembrane passes span 30–50 (EGTA…LFAL), 57–77 (WMGF…LITL), and 109–129 (IIKG…YVAL).

Belongs to the FrdC family. As to quaternary structure, part of an enzyme complex containing four subunits: a flavoprotein (FrdA), an iron-sulfur protein (FrdB), and two hydrophobic anchor proteins (FrdC and FrdD).

Its subcellular location is the cell inner membrane. In terms of biological role, two distinct, membrane-bound, FAD-containing enzymes are responsible for the catalysis of fumarate and succinate interconversion; fumarate reductase is used in anaerobic growth, and succinate dehydrogenase is used in aerobic growth. Anchors the catalytic components of the fumarate reductase complex to the cell inner membrane, binds quinones. This is Fumarate reductase subunit C from Salmonella dublin (strain CT_02021853).